A 60-amino-acid chain; its full sequence is Large ribosomal subunit protein uL30 (60 aa).

It belongs to the universal ribosomal protein uL30 family. In terms of assembly, part of the 50S ribosomal subunit.

The sequence is that of Large ribosomal subunit protein uL30 from Shewanella sp. (strain ANA-3).